The chain runs to 159 residues: MPELKIKTEKVEKQLTKEPLVLKTPKEKIDNSGKFYATGKRKNAIARVWLKVGKGKIVVNKKTIAQYFPSETYVKTILQPFVLTKTIDQYDVICTVRGGGISGQKGAILHGISKALDKSAPDFHVILRKGGLLTRDSRVVERKKYGQRKARKKTQFSKR.

This sequence belongs to the universal ribosomal protein uS9 family.

This is Small ribosomal subunit protein uS9 from Rickettsia massiliae (strain Mtu5).